Reading from the N-terminus, the 360-residue chain is Phosphoserine aminotransferase (360 aa).

Arg-42 is a binding site for L-glutamate. Trp-102, Thr-152, Asp-171, and Gln-194 together coordinate pyridoxal 5'-phosphate. Lys-195 is subject to N6-(pyridoxal phosphate)lysine. Position 237–238 (237–238 (NT)) interacts with pyridoxal 5'-phosphate.

This sequence belongs to the class-V pyridoxal-phosphate-dependent aminotransferase family. SerC subfamily. In terms of assembly, homodimer. The cofactor is pyridoxal 5'-phosphate.

The protein localises to the cytoplasm. It carries out the reaction O-phospho-L-serine + 2-oxoglutarate = 3-phosphooxypyruvate + L-glutamate. The enzyme catalyses 4-(phosphooxy)-L-threonine + 2-oxoglutarate = (R)-3-hydroxy-2-oxo-4-phosphooxybutanoate + L-glutamate. It participates in amino-acid biosynthesis; L-serine biosynthesis; L-serine from 3-phospho-D-glycerate: step 2/3. The protein operates within cofactor biosynthesis; pyridoxine 5'-phosphate biosynthesis; pyridoxine 5'-phosphate from D-erythrose 4-phosphate: step 3/5. Functionally, catalyzes the reversible conversion of 3-phosphohydroxypyruvate to phosphoserine and of 3-hydroxy-2-oxo-4-phosphonooxybutanoate to phosphohydroxythreonine. This Coxiella burnetii (strain Dugway 5J108-111) protein is Phosphoserine aminotransferase.